Here is a 104-residue protein sequence, read N- to C-terminus: Proteasome subunit beta type-8 (104 aa).

Belongs to the peptidase T1B family. As to quaternary structure, the 26S proteasome consists of a 20S proteasome core and two 19S regulatory subunits. The 20S proteasome core is composed of 28 subunits that are arranged in four stacked rings, resulting in a barrel-shaped structure. The two end rings are each formed by seven alpha subunits, and the two central rings are each formed by seven beta subunits. The catalytic chamber with the active sites is on the inside of the barrel. Component of the immunoproteasome, where it displaces the equivalent housekeeping subunit PSMB5. Component of the spermatoproteasome, a form of the proteasome specifically found in testis. Directly interacts with POMP.

It localises to the cytoplasm. The protein localises to the nucleus. It carries out the reaction Cleavage of peptide bonds with very broad specificity.. Functionally, the proteasome is a multicatalytic proteinase complex which is characterized by its ability to cleave peptides with Arg, Phe, Tyr, Leu, and Glu adjacent to the leaving group at neutral or slightly basic pH. The proteasome has an ATP-dependent proteolytic activity. This subunit is involved in antigen processing to generate class I binding peptides. May participate in the generation of spliced peptides resulting from the ligation of two separate proteasomal cleavage products that are not contiguous in the parental protein. Required for adipocyte differentiation. The chain is Proteasome subunit beta type-8 (PSMB8) from Sus scrofa (Pig).